The chain runs to 502 residues: Bone morphogenetic protein receptor type-1B (502 aa).

Positions 1-13 (MLLRSSGKLNVGT) are cleaved as a signal peptide. The interval 1-24 (MLLRSSGKLNVGTKKEDGESTAPT) is disordered. At 14–126 (KKEDGESTAP…DFVDGPIHHK (113 aa)) the chain is on the extracellular side. 5 disulfide bridges follow: C32-C53, C34-C38, C47-C71, C81-C95, and C96-C102. A helical membrane pass occupies residues 127–148 (ALLISVTVCSLLLVLIILFCYF). Residues 149–502 (RYKRQEARPR…KMSESQDIKL (354 aa)) lie on the Cytoplasmic side of the membrane. Positions 174–203 (ESLRDLIEQSQSSGSGSGLPLLVQRTIAKQ) constitute a GS domain. Residues 204–494 (IQMVKQIGKG…LRVKKTLAKM (291 aa)) enclose the Protein kinase domain. Residues 210–218 (IGKGRYGEV) and K231 each bind ATP. The active-site Proton acceptor is the D332.

The protein belongs to the protein kinase superfamily. TKL Ser/Thr protein kinase family. TGFB receptor subfamily. In terms of assembly, interacts with high affinity with GDF5; positively regulates chondrocyte differentiation. Interacts with SCUBE3. Interacts with TSC22D1/TSC-22. Interacts with TGFBR3. The cofactor is Mg(2+). It depends on Mn(2+) as a cofactor. Post-translationally, autophosphorylated.

The protein localises to the cell membrane. The enzyme catalyses L-threonyl-[receptor-protein] + ATP = O-phospho-L-threonyl-[receptor-protein] + ADP + H(+). It carries out the reaction L-seryl-[receptor-protein] + ATP = O-phospho-L-seryl-[receptor-protein] + ADP + H(+). Its function is as follows. On ligand binding, forms a receptor complex consisting of two type II and two type I transmembrane serine/threonine kinases. Type II receptors phosphorylate and activate type I receptors which autophosphorylate, then bind and activate SMAD transcriptional regulators. Receptor for BMP7/OP-1. Receptor for GDF5. Positively regulates chondrocyte differentiation through GDF5 interaction. The polypeptide is Bone morphogenetic protein receptor type-1B (Bmpr1b) (Mus musculus (Mouse)).